Consider the following 256-residue polypeptide: Proteasome subunit alpha (256 aa).

The interval 226-256 (LLPSQEESGSTDGEASGDAGDDKKTGDDKKS) is disordered. A compositionally biased stretch (basic and acidic residues) spans 245-256 (GDDKKTGDDKKS).

This sequence belongs to the peptidase T1A family. As to quaternary structure, the 20S proteasome core is composed of 14 alpha and 14 beta subunits that assemble into four stacked heptameric rings, resulting in a barrel-shaped structure. The two inner rings, each composed of seven catalytic beta subunits, are sandwiched by two outer rings, each composed of seven alpha subunits. The catalytic chamber with the active sites is on the inside of the barrel. Has a gated structure, the ends of the cylinder being occluded by the N-termini of the alpha-subunits. Is capped by the proteasome-associated ATPase, ARC.

Its subcellular location is the cytoplasm. The protein operates within protein degradation; proteasomal Pup-dependent pathway. The formation of the proteasomal ATPase ARC-20S proteasome complex, likely via the docking of the C-termini of ARC into the intersubunit pockets in the alpha-rings, may trigger opening of the gate for substrate entry. Interconversion between the open-gate and close-gate conformations leads to a dynamic regulation of the 20S proteasome proteolysis activity. Component of the proteasome core, a large protease complex with broad specificity involved in protein degradation. The polypeptide is Proteasome subunit alpha (Saccharopolyspora erythraea (strain ATCC 11635 / DSM 40517 / JCM 4748 / NBRC 13426 / NCIMB 8594 / NRRL 2338)).